Consider the following 100-residue polypeptide: Urease subunit gamma (100 aa).

The protein belongs to the urease gamma subunit family. As to quaternary structure, heterotrimer of UreA (gamma), UreB (beta) and UreC (alpha) subunits. Three heterotrimers associate to form the active enzyme.

Its subcellular location is the cytoplasm. The catalysed reaction is urea + 2 H2O + H(+) = hydrogencarbonate + 2 NH4(+). It participates in nitrogen metabolism; urea degradation; CO(2) and NH(3) from urea (urease route): step 1/1. This Verminephrobacter eiseniae (strain EF01-2) protein is Urease subunit gamma.